The sequence spans 166 residues: Small ribosomal subunit protein uS5 (166 aa).

The S5 DRBM domain occupies 11–74 (LIEKLVSVKR…ENAKKNMVSV (64 aa)).

Belongs to the universal ribosomal protein uS5 family. Part of the 30S ribosomal subunit. Contacts proteins S4 and S8.

In terms of biological role, with S4 and S12 plays an important role in translational accuracy. Its function is as follows. Located at the back of the 30S subunit body where it stabilizes the conformation of the head with respect to the body. In Francisella tularensis subsp. tularensis (strain FSC 198), this protein is Small ribosomal subunit protein uS5.